The sequence spans 166 residues: Chemoreceptor glutamine deamidase CheD (166 aa).

The protein belongs to the CheD family. In terms of assembly, forms a complex with CheC.

The enzyme catalyses L-glutaminyl-[protein] + H2O = L-glutamyl-[protein] + NH4(+). In terms of biological role, deamidates glutamine residues to glutamate on methyl-accepting chemotaxis receptors (MCPs). CheD-mediated MCP deamidation is required for productive communication of the conformational signals of the chemoreceptors to the CheA kinase. In Bacillus velezensis (strain DSM 23117 / BGSC 10A6 / LMG 26770 / FZB42) (Bacillus amyloliquefaciens subsp. plantarum), this protein is Chemoreceptor glutamine deamidase CheD.